A 366-amino-acid polypeptide reads, in one-letter code: Aminomethyltransferase (366 aa).

This sequence belongs to the GcvT family. In terms of assembly, the glycine cleavage system is composed of four proteins: P, T, L and H.

The catalysed reaction is N(6)-[(R)-S(8)-aminomethyldihydrolipoyl]-L-lysyl-[protein] + (6S)-5,6,7,8-tetrahydrofolate = N(6)-[(R)-dihydrolipoyl]-L-lysyl-[protein] + (6R)-5,10-methylene-5,6,7,8-tetrahydrofolate + NH4(+). The glycine cleavage system catalyzes the degradation of glycine. This Bacillus cereus (strain ZK / E33L) protein is Aminomethyltransferase.